The sequence spans 372 residues: Cobalt-precorrin-5B C(1)-methyltransferase (372 aa).

This sequence belongs to the CbiD family.

It catalyses the reaction Co-precorrin-5B + S-adenosyl-L-methionine = Co-precorrin-6A + S-adenosyl-L-homocysteine. Its pathway is cofactor biosynthesis; adenosylcobalamin biosynthesis; cob(II)yrinate a,c-diamide from sirohydrochlorin (anaerobic route): step 6/10. Functionally, catalyzes the methylation of C-1 in cobalt-precorrin-5B to form cobalt-precorrin-6A. This is Cobalt-precorrin-5B C(1)-methyltransferase from Geobacillus kaustophilus (strain HTA426).